A 370-amino-acid polypeptide reads, in one-letter code: tRNA (guanine(26)-N(2))-dimethyltransferase (370 aa).

One can recognise a Trm1 methyltransferase domain in the interval 4–368 (TWVTEGRTTI…APLEEIRDCI (365 aa)). Residues R41, R66, D82, D108, and A109 each coordinate S-adenosyl-L-methionine. The Zn(2+) site is built by C237, C240, C256, and C259.

Belongs to the class I-like SAM-binding methyltransferase superfamily. Trm1 family.

It carries out the reaction guanosine(26) in tRNA + 2 S-adenosyl-L-methionine = N(2)-dimethylguanosine(26) in tRNA + 2 S-adenosyl-L-homocysteine + 2 H(+). In terms of biological role, dimethylates a single guanine residue at position 26 of a number of tRNAs using S-adenosyl-L-methionine as donor of the methyl groups. This is tRNA (guanine(26)-N(2))-dimethyltransferase from Methanospirillum hungatei JF-1 (strain ATCC 27890 / DSM 864 / NBRC 100397 / JF-1).